Here is a 562-residue protein sequence, read N- to C-terminus: Chaperonin GroEL 1 (562 aa).

Residues 30–33 (TLGP), lysine 51, 87–91 (DGTTT), glycine 415, 478–480 (NAA), and aspartate 494 contribute to the ATP site.

This sequence belongs to the chaperonin (HSP60) family. In terms of assembly, forms a cylinder of 14 subunits composed of two heptameric rings stacked back-to-back. Interacts with the co-chaperonin GroES.

It localises to the cytoplasm. It catalyses the reaction ATP + H2O + a folded polypeptide = ADP + phosphate + an unfolded polypeptide.. Functionally, together with its co-chaperonin GroES, plays an essential role in assisting protein folding. The GroEL-GroES system forms a nano-cage that allows encapsulation of the non-native substrate proteins and provides a physical environment optimized to promote and accelerate protein folding. The protein is Chaperonin GroEL 1 of Sorangium cellulosum (strain So ce56) (Polyangium cellulosum (strain So ce56)).